A 299-amino-acid polypeptide reads, in one-letter code: KATNB1-like protein 1 (299 aa).

The Nuclear localization signal signature appears at 8-15 (VKKRNFSN). Ser-56 carries the post-translational modification Phosphoserine.

In terms of assembly, interacts with KATNA1 and KATNAL1; these interactions are competed by KATNB1 which has a higher affinity for them.

It localises to the nucleus. Its subcellular location is the cytoplasm. It is found in the cytoskeleton. The protein resides in the spindle pole. Regulates microtubule-severing activity of KATNAL1 in a concentration-dependent manner in vitro. The sequence is that of KATNB1-like protein 1 (Katnbl1) from Mus musculus (Mouse).